The sequence spans 464 residues: Olfactomedin (464 aa).

The N-terminal stretch at 1 to 16 is a signal peptide; it reads MYICLLTLVLIHAAAA. N-linked (GlcNAc...) asparagine glycosylation is found at N21, N85, N143, N228, N279, and N383. Residues 192-464 form the Olfactomedin-like domain; that stretch reads SCQHQGLAHI…LLHYDIALKP (273 aa). C193 and C394 form a disulfide bridge.

Oligomer; disulfide-linked. In terms of processing, most, if not all, of the six potential sites for N-glycosylation carry carbohydrate moieties of 8-10 sugar residues. Expressed exclusively in olfactory neuroepithelium.

Its subcellular location is the secreted. The protein resides in the extracellular space. May influence the maintenance, growth, or differentiation of chemosensory cilia on the apical dendrites of olfactory neurons. Major component of the extracellular matrix of the olfactory neuroepithelium. This is Olfactomedin from Aquarana catesbeiana (American bullfrog).